The following is a 540-amino-acid chain: 2,3-bisphosphoglycerate-independent phosphoglycerate mutase (540 aa).

Positions 13 and 63 each coordinate Mn(2+). Serine 63 serves as the catalytic Phosphoserine intermediate. Substrate is bound by residues histidine 124, 154-155 (RD), arginine 186, arginine 192, 262-265 (RPDR), and lysine 356. Residues aspartate 423, histidine 427, aspartate 464, histidine 465, and histidine 483 each contribute to the Mn(2+) site.

Belongs to the BPG-independent phosphoglycerate mutase family. In terms of assembly, monomer. Requires Mn(2+) as cofactor.

The enzyme catalyses (2R)-2-phosphoglycerate = (2R)-3-phosphoglycerate. It functions in the pathway carbohydrate degradation; glycolysis; pyruvate from D-glyceraldehyde 3-phosphate: step 3/5. In terms of biological role, catalyzes the interconversion of 2-phosphoglycerate and 3-phosphoglycerate. The chain is 2,3-bisphosphoglycerate-independent phosphoglycerate mutase from Chloroflexus aggregans (strain MD-66 / DSM 9485).